Reading from the N-terminus, the 346-residue chain is MVEFFTQTTTGAILLILLQCLLLVVPLLVALAFLMYADRKIWAAVMMRKGPNVVGAFGLLQSFADFLKYIVKEIVVPAGADRAVYFLAPIVSLVMALIAWAVIPFNDGWVLSSLNVAVLYVFAVSSLEVYGVIMGGWASNSKYPFLGSLRSAAQMISYEVSIGLIIIGVIISTGSMNFTAIVHAQDGDLGLLNWYFLPHFPMLFLFFISALAETNRPPFDLPEAEAELVAGYQVEYSSTPFLLFMIGELVAVVLMCALTVLLFFGGWLSPIPGLPDGVFWMILKMLAVFFMFSMVKAIVPRYRYDQLMRLGWKVFLPFSLFWVVFVAFMARYEVLGGFWARFAVGG.

9 helical membrane passes run 13–33 (ILLI…ALAF), 51–71 (PNVV…KYIV), 83–103 (AVYF…WAVI), 116–136 (VAVL…IMGG), 162–182 (IGLI…TAIV), 191–211 (LLNW…ISAL), 244–264 (FMIG…LLFF), 278–298 (VFWM…VKAI), and 310–330 (LGWK…AFMA).

The protein belongs to the complex I subunit 1 family. NDH-1 is composed of 14 different subunits. Subunits NuoA, H, J, K, L, M, N constitute the membrane sector of the complex.

It is found in the cell inner membrane. The catalysed reaction is a quinone + NADH + 5 H(+)(in) = a quinol + NAD(+) + 4 H(+)(out). Its function is as follows. NDH-1 shuttles electrons from NADH, via FMN and iron-sulfur (Fe-S) centers, to quinones in the respiratory chain. The immediate electron acceptor for the enzyme in this species is believed to be ubiquinone. Couples the redox reaction to proton translocation (for every two electrons transferred, four hydrogen ions are translocated across the cytoplasmic membrane), and thus conserves the redox energy in a proton gradient. This subunit may bind ubiquinone. This is NADH-quinone oxidoreductase subunit H from Jannaschia sp. (strain CCS1).